Reading from the N-terminus, the 96-residue chain is Putative septation protein SpoVG (96 aa).

Belongs to the SpoVG family.

In terms of biological role, could be involved in septation. This is Putative septation protein SpoVG from Borrelia hermsii (strain HS1 / DAH).